Here is a 587-residue protein sequence, read N- to C-terminus: Putative adhesin (587 aa).

The N-terminal stretch at 1–19 (MKFAISTLLIILQAAAVFA) is a signal peptide. A disulfide bridge links Cys211 with Cys261. The N-linked (GlcNAc...) asparagine glycan is linked to Asn239. Tandem repeats lie at residues 432–455 (IVTV…TYTK), 466–489 (IVTV…TYTK), 491–512 (PEIV…YHDV), and 513–531 (PEVV…TTTY). A 4 X 24 AA approximate tandem repeats, Thr-rich region spans residues 432–531 (IVTVITKEGG…EGGEKVTTTY (100 aa)). The GPI-anchor amidated serine moiety is linked to residue Ser562. A propeptide spans 563–587 (EAQVNLGSKSAVGLLAIVPMLFLAI) (removed in mature form).

In terms of processing, the GPI-anchor is attached to the protein in the endoplasmic reticulum and serves to target the protein to the cell surface. There, the glucosamine-inositol phospholipid moiety is cleaved off and the GPI-modified mannoprotein is covalently attached via its lipidless GPI glycan remnant to the 1,6-beta-glucan of the outer cell wall layer.

Its subcellular location is the cell membrane. The protein localises to the secreted. The protein resides in the cell wall. Its function is as follows. Putative adhesion protein. May be involved in cell-cell interaction, interacting with other proteins by salt bridges and hydrogen bonds. The chain is Putative adhesin from Komagataella phaffii (strain ATCC 76273 / CBS 7435 / CECT 11047 / NRRL Y-11430 / Wegner 21-1) (Yeast).